Here is a 278-residue protein sequence, read N- to C-terminus: Transmembrane protein 41A-B (278 aa).

A signal peptide spans 1–23; it reads MRSIWGLIVLVAAATFYLYLLSA. Transmembrane regions (helical) follow at residues 78–98, 101–121, 164–184, 191–211, and 230–250; these read GYVF…AIPG, FLNM…IACT, LFFF…FLNV, IPIP…NFIC, and WFTL…GALI.

The protein belongs to the TMEM41 family.

It is found in the membrane. This is Transmembrane protein 41A-B from Danio rerio (Zebrafish).